The chain runs to 623 residues: Set1/Ash2 histone methyltransferase complex subunit ASH2 (623 aa).

Positions 1-18 (MAAAGAGPGPGVSAGPGP) are enriched in gly residues. Residues 1-62 (MAAAGAGPGP…SGEAESGDAN (62 aa)) form a PHD-type; atypical zinc finger. Positions 1–99 (MAAAGAGPGP…MDTQAGSVDE (99 aa)) are disordered. Residues 36-56 (AAGAGEGPSAAPGAEPSSGEA) are compositionally biased toward low complexity. Residues 63 to 172 (LVDVSGLETE…MCLSALANLT (110 aa)) are DNA-binding. Residues 84–95 (GDTSEVMDTQAG) are compositionally biased toward polar residues. The residue at position 96 (Ser96) is a Phosphoserine. The C4-type zinc-finger motif lies at 112–145 (CGICTKWFTADTFGIDTSSCLPFMTNYSFHCNVC). Positions 230 to 247 (LVKEHPDPGSKDPEEDYP) are enriched in basic and acidic residues. Residues 230–326 (LVKEHPDPGS…AQRLPPHGYP (97 aa)) are disordered. Polar residues predominate over residues 265–277 (NQKQSSAVSASGN). Positions 278–290 (LNGGIAAGSSGKG) are enriched in gly residues. Arg291 carries the asymmetric dimethylarginine; by PRMT1 and PRMT5 modification. Ser311 carries the phosphoserine modification. Residues 311 to 623 (SDPLFSAQRL…DGRRSPPWEP (313 aa)) are interaction with RBBP5. One can recognise a B30.2/SPRY domain in the interval 355-578 (LDCWAGKPIP…VSINFGPSFK (224 aa)).

In terms of assembly, interacts with HCFC1. Core component of several methyltransferase-containing complexes including MLL1/MLL, MLL2/3 (also named ASCOM complex) and MLL4/WBP7. Each complex is at least composed of ASH2L, RBBP5, WDR5, DPY30, one or more specific histone methyltransferases (KMT2A/MLL1, KMT2D/MLL2, KMT2C/MLL3 and KMT2B/MLL4), and the facultative components PAGR1, BACC1, CHD8, E2F6, HCFC1, HCFC2, HSP70, INO80C, KDM6A, KANSL1, LAS1L, MAX, MCRS1, MEN1, MGA, KAT8/MOF, NCOA6, PAXIP1/PTIP, PELP1, PHF20, PRP31, RING2, RUVB1/TIP49A, RUVB2/TIP49B, SENP3, TAF1, TAF4, TAF6, TAF7, TAF9, TEX10 and alpha- and beta-tubulin. Component of the SET1 complex, at least composed of the catalytic subunit (SETD1A or SETD1B), WDR5, WDR82, RBBP5, ASH2L/ASH2, CXXC1/CFP1, HCFC1 and DPY30. Found in a complex with RBBP5, ASH2L, DPY30, KMT2A, KMT2D and WDR5. Component of a histone methylation complex composed of at least ZNF335, RBBP5, ASH2L and WDR5; the complex may have histone H3-specific methyltransferase activity, however does not have specificity for 'Lys-4' of histone H3. Within the complex, interacts with ZNF335. Interacts with RBBP5. Components of this complex may associate with components of a nuclear receptor-mediated transcription complex to form a complex at least composed of ZNF335, HCFC1, CCAR2, EMSY, MKI67, RBBP5, ASH2L and WDR5. Within this complex also interacts with CCAR2 and EMSY. Interacts with DPY30. Interacts with SETD1A and SETD1B. Post-translationally, both monomethylated and dimethylated on arginine residues in the C-terminus. Arg-291 is the major site. Methylation is not required for nuclear localization, nor for MLL complex integrity or maintenance of global histone H3K4me3 levels. As to expression, ubiquitously expressed, with abundant expression in the heart, skeletal muscle and kidney. Low expression is seen in spleen, lung and testis.

It localises to the nucleus. In terms of biological role, transcriptional regulator. Component or associated component of some histone methyltransferase complexes which regulates transcription through recruitment of those complexes to gene promoters. Component of the Set1/Ash2 histone methyltransferase (HMT) complex, a complex that specifically methylates 'Lys-4' of histone H3, but not if the neighboring 'Lys-9' residue is already methylated. As part of the MLL1/MLL complex it is involved in methylation and dimethylation at 'Lys-4' of histone H3. May play a role in hematopoiesis. In association with RBBP5 and WDR5, stimulates the histone methyltransferase activities of KMT2A, KMT2B, KMT2C, KMT2D, SETD1A and SETD1B. The protein is Set1/Ash2 histone methyltransferase complex subunit ASH2 (Ash2l) of Mus musculus (Mouse).